The chain runs to 455 residues: Bifunctional protein GlmU (455 aa).

The segment at 1–228 (MNNTLTTIIL…EFEIEGVNNR (228 aa)) is pyrophosphorylase. UDP-N-acetyl-alpha-D-glucosamine contacts are provided by residues 10–13 (LAAG), lysine 24, glutamine 75, 80–81 (GT), 102–104 (YGD), glycine 138, glutamate 153, asparagine 168, and asparagine 226. Aspartate 104 is a Mg(2+) binding site. Residue asparagine 226 participates in Mg(2+) binding. The interval 229–249 (QQLAQLERKWQAKLVEDLQVQ) is linker. The interval 250-455 (GVQFADPNRV…DNYQRPEKKK (206 aa)) is N-acetyltransferase. Residues arginine 332 and lysine 350 each contribute to the UDP-N-acetyl-alpha-D-glucosamine site. Histidine 362 (proton acceptor) is an active-site residue. Positions 365 and 376 each coordinate UDP-N-acetyl-alpha-D-glucosamine. Acetyl-CoA is bound by residues alanine 379, 385 to 386 (NY), alanine 422, and arginine 439.

In the N-terminal section; belongs to the N-acetylglucosamine-1-phosphate uridyltransferase family. It in the C-terminal section; belongs to the transferase hexapeptide repeat family. As to quaternary structure, homotrimer. It depends on Mg(2+) as a cofactor.

The protein resides in the cytoplasm. The enzyme catalyses alpha-D-glucosamine 1-phosphate + acetyl-CoA = N-acetyl-alpha-D-glucosamine 1-phosphate + CoA + H(+). It catalyses the reaction N-acetyl-alpha-D-glucosamine 1-phosphate + UTP + H(+) = UDP-N-acetyl-alpha-D-glucosamine + diphosphate. It participates in nucleotide-sugar biosynthesis; UDP-N-acetyl-alpha-D-glucosamine biosynthesis; N-acetyl-alpha-D-glucosamine 1-phosphate from alpha-D-glucosamine 6-phosphate (route II): step 2/2. Its pathway is nucleotide-sugar biosynthesis; UDP-N-acetyl-alpha-D-glucosamine biosynthesis; UDP-N-acetyl-alpha-D-glucosamine from N-acetyl-alpha-D-glucosamine 1-phosphate: step 1/1. It functions in the pathway bacterial outer membrane biogenesis; LPS lipid A biosynthesis. In terms of biological role, catalyzes the last two sequential reactions in the de novo biosynthetic pathway for UDP-N-acetylglucosamine (UDP-GlcNAc). The C-terminal domain catalyzes the transfer of acetyl group from acetyl coenzyme A to glucosamine-1-phosphate (GlcN-1-P) to produce N-acetylglucosamine-1-phosphate (GlcNAc-1-P), which is converted into UDP-GlcNAc by the transfer of uridine 5-monophosphate (from uridine 5-triphosphate), a reaction catalyzed by the N-terminal domain. This chain is Bifunctional protein GlmU, found in Psychrobacter sp. (strain PRwf-1).